The sequence spans 123 residues: Small ribosomal subunit protein uS12 (123 aa).

Aspartate 89 carries the post-translational modification 3-methylthioaspartic acid.

This sequence belongs to the universal ribosomal protein uS12 family. As to quaternary structure, part of the 30S ribosomal subunit. Contacts proteins S8 and S17. May interact with IF1 in the 30S initiation complex.

With S4 and S5 plays an important role in translational accuracy. Functionally, interacts with and stabilizes bases of the 16S rRNA that are involved in tRNA selection in the A site and with the mRNA backbone. Located at the interface of the 30S and 50S subunits, it traverses the body of the 30S subunit contacting proteins on the other side and probably holding the rRNA structure together. The combined cluster of proteins S8, S12 and S17 appears to hold together the shoulder and platform of the 30S subunit. The polypeptide is Small ribosomal subunit protein uS12 (Anaeromyxobacter dehalogenans (strain 2CP-1 / ATCC BAA-258)).